The chain runs to 91 residues: Large ribosomal subunit protein bL31B (91 aa).

It belongs to the bacterial ribosomal protein bL31 family. Type B subfamily. In terms of assembly, part of the 50S ribosomal subunit.

This Neisseria meningitidis serogroup C (strain 053442) protein is Large ribosomal subunit protein bL31B.